A 279-amino-acid polypeptide reads, in one-letter code: NADPH-dependent 7-cyano-7-deazaguanine reductase (279 aa).

Position 86–88 (86–88 (IES)) interacts with substrate. An NADPH-binding site is contributed by 88-89 (SK). The active-site Thioimide intermediate is C187. The active-site Proton donor is the D194. Substrate is bound at residue 226-227 (HE). 255 to 256 (RG) contacts NADPH.

This sequence belongs to the GTP cyclohydrolase I family. QueF type 2 subfamily. Homodimer.

It localises to the cytoplasm. It carries out the reaction 7-aminomethyl-7-carbaguanine + 2 NADP(+) = 7-cyano-7-deazaguanine + 2 NADPH + 3 H(+). It participates in tRNA modification; tRNA-queuosine biosynthesis. Its function is as follows. Catalyzes the NADPH-dependent reduction of 7-cyano-7-deazaguanine (preQ0) to 7-aminomethyl-7-deazaguanine (preQ1). This Glaesserella parasuis serovar 5 (strain SH0165) (Haemophilus parasuis) protein is NADPH-dependent 7-cyano-7-deazaguanine reductase.